The sequence spans 139 residues: ATP synthase epsilon chain (139 aa).

Belongs to the ATPase epsilon chain family. In terms of assembly, F-type ATPases have 2 components, CF(1) - the catalytic core - and CF(0) - the membrane proton channel. CF(1) has five subunits: alpha(3), beta(3), gamma(1), delta(1), epsilon(1). CF(0) has three main subunits: a, b and c.

The protein resides in the cell inner membrane. Its function is as follows. Produces ATP from ADP in the presence of a proton gradient across the membrane. This Salmonella typhimurium (strain LT2 / SGSC1412 / ATCC 700720) protein is ATP synthase epsilon chain.